The sequence spans 118 residues: D-dopachrome decarboxylase (118 aa).

Pro-2 is modified (N-acetylproline). Residue Lys-33 is modified to N6-acetyllysine.

Belongs to the MIF family. In terms of assembly, homotrimer. Highly expressed in the liver and at lower levels in the heart, lung and pancreas.

It is found in the cytoplasm. The catalysed reaction is D-dopachrome + H(+) = 5,6-dihydroxyindole + CO2. Functionally, tautomerization of D-dopachrome with decarboxylation to give 5,6-dihydroxyindole (DHI). The chain is D-dopachrome decarboxylase (DDT) from Homo sapiens (Human).